Consider the following 325-residue polypeptide: Phage-like element PBSX protein XkdQ (325 aa).

The protein to B.subtilis YqbQ.

This is Phage-like element PBSX protein XkdQ (xkdQ) from Bacillus subtilis (strain 168).